The sequence spans 2136 residues: Protein CELLULOSE SYNTHASE INTERACTIVE 3 (2136 aa).

42 ARM repeats span residues 27–66, 71–111, 113–152, 159–201, 204–243, 246–286, 289–337, 376–417, 419–458, 461–500, 503–542, 545–584, 586–618, 619–663, 666–705, 711–750, 752–791, 811–848, 849–887, 936–980, 1013–1041, 1042–1083, 1109–1149, 1163–1204, 1207–1247, 1249–1288, 1290–1329, 1333–1375, 1377–1416, 1418–1457, 1460–1499, 1518–1546, 1547–1585, 1587–1626, 1628–1669, 1670–1704, 1710–1750, 1790–1833, 1836–1875, 1921–1960, 1969–2008, and 2010–2035; these read MEMDDPEKAMATVAQLIEQLHAKTSSPQDKELTTARLLGI, REAR…VLCK, KDLRLKVLLGGCIPPLLSVLKSGTMETRKAAAEAIYEVSS, HIGM…NLCG, DGYWRLTLEGSGVDIVVSLLSSDNPNSQANAASLLARLVL, CDSI…ALSA, DEAK…NVFG, PESS…SLYG, SSLSCYLDDAEAKRVLIALITMASADVRERLIICLSGLCH, VGIWEAIGKREGIQLFISFLGLSSEQHQEYAVEMLKILTA, DDSKWAVTAAGGIPPLVQLLETGSQKAKEDAACILWNLCC, EEIRDCVERAGGIPAFLWLLKTGGPNSQETSAKTLVKLVH, ADPATINQLLALLLGDDPTSKIQVIEVLGHVLS, KASQ…DLFS, QDICGHLATDDIINPWIKLLTNNTQNVAKQVARALDALSR, NNKKKSYIAEGDIKSLIKLAKNSSIESAENAVSALANLLS, PDIAAEALAEDVVSAFTRILADGSPEGKRNASRALHQLLK, SLVDSLKSIDVDSADAFNILEVVALLAKTKSGVNFSYP, PWIALAEVPSSLETLVQCLAEGHTLVQDKAIEVLSRLCS, QLIT…GFLE, SVDAKSKVIVMEAGGLEVLVGKLARYTSS, AQAE…TLAV, RGIN…SLVK, EDVR…RIAD, DTNK…VLFS, HELRQNEMALSSLNQLIAVLRLGSRSARYSAAGALNELFD, ENIRNSEIACQAVQPLMDILGSVSESEQEVALSALIKLSS, SNTA…VVFS, KNIRTSASASGCMKPLITLMQSERSAAVEAAVFAIKILLD, EQHLELAAAHNIQELLVGLVSGKNYVIIEASLSALIKLGK, VPRKLDMVEAGIIERCLELLPGASSSLCSAVVELFRILTN, AVLLRSDLTLWGQHSALQALVNILEKQQT, LEAFSFTPSEAIVPLISFLESSSQAIQQLGAELLSHFLT, EDFQQDITTQSAVVPLVRLAGIGILSLQETAIKALEKISA, WPKA…NILQ, YDAECFFRVELPVLVKLLFSTIESTVLLALKALML, ASST…NNPR, SQHE…NFVM, RTNRRAVAEAGGVLLIQELLLSCNPEVSGQAALMVKFLFS, PKLRASEAATFCIPHLVGALKSGVEDVQGLVLDILYLLRH, VAKSQAMIAAEAIPVLQMLMKTCPPRFHDKADSLLHCLPG, and LTVNVMRANNLKQSMATTNAFCQLTI. Residues 1989-2106 form the C2 domain; that stretch reads KTCPPRFHDK…VTEGEYSGSL (118 aa).

Associates with cellulase synthase (CESA) complexes. Binds to cortical microtubules. Interacts with CESA3 and CESA6. In terms of tissue distribution, expressed in dark-grown hypocotyls, leaves (confined to vasculature and trichomes), stamen, pollen, developing siliques, and roots. Restricted in meristematic tissue of the shoot and root. Present in distinct punctae at the cell cortex, called microtubule-associated cellulose synthase compartments, that move with constant velocities of 10 to 3000 nm/min.

The protein resides in the cell membrane. It is found in the cytoplasm. Its subcellular location is the cytoskeleton. The protein localises to the endomembrane system. Functionally, regulator of the microtubular cytoskeleton. Microtubule-associated protein involved in the association of cellulase synthase (CESA) complexes (CSCs) and cortical microtubules. Promotes dynamics of CSCs in the plasma membrane in both microtubules-dependent and microtubules-independent manners. Regulates primary cell wall biosynthesis and cellulose microfibrils organization. This is Protein CELLULOSE SYNTHASE INTERACTIVE 3 from Arabidopsis thaliana (Mouse-ear cress).